A 510-amino-acid polypeptide reads, in one-letter code: Glutamate decarboxylase (510 aa).

107–109 is a binding site for substrate; that stretch reads QLS. N6-(pyridoxal phosphate)lysine is present on Lys-322. Arg-483 contributes to the substrate binding site.

The protein belongs to the group II decarboxylase family. In terms of assembly, homodimer. Pyridoxal 5'-phosphate serves as cofactor. As to expression, expressed in the head (at protein level).

It carries out the reaction L-glutamate + H(+) = 4-aminobutanoate + CO2. Functionally, catalyzes the production of GABA. The sequence is that of Glutamate decarboxylase (Gad1) from Drosophila melanogaster (Fruit fly).